The chain runs to 761 residues: Membrane protein of ER body-like protein (761 aa).

Disordered stretches follow at residues 1 to 85 and 120 to 162; these read MGSA…GEHT and GSES…RSRE. Residues 22–31 are compositionally biased toward acidic residues; sequence EVEEDDEQIV. The span at 48-65 shows a compositional bias: low complexity; it reads VDSSTITNTSSSSSSSFS. The span at 74–85 shows a compositional bias: basic and acidic residues; that stretch reads PDFHSNGDGEHT. Residues 136–154 show a composition bias toward polar residues; sequence TADLNGEQTQLEPENGSTS. Residues 186-206 are a coiled coil; the sequence is IEEEVDFEDVEYHDVENMMDK. Disordered regions lie at residues 338–374 and 416–448; these read SSSV…TGSA and QTQQ…PSHG. The segment covering 416 to 432 has biased composition (polar residues); it reads QTQQKIDNDDSSTADGN. 5 helical membrane passes run 549–569, 573–593, 640–660, 670–690, and 702–722; these read IVYG…SAAG, SMLN…ILII, VAIL…YFSF, VASV…AKAH, and ILYY…VGNF.

Belongs to the CCC1 family.

It localises to the endoplasmic reticulum membrane. Functionally, not essential for the accumulation of ER body components, including PYK10. In Arabidopsis thaliana (Mouse-ear cress), this protein is Membrane protein of ER body-like protein (MEBL).